The sequence spans 676 residues: DNA-directed RNA polymerase subunit beta' (676 aa).

Zn(2+)-binding residues include cysteine 69, cysteine 71, cysteine 87, and cysteine 90. Mg(2+) is bound by residues aspartate 485, aspartate 487, and aspartate 489.

It belongs to the RNA polymerase beta' chain family. RpoC1 subfamily. As to quaternary structure, in plastids the minimal PEP RNA polymerase catalytic core is composed of four subunits: alpha, beta, beta', and beta''. When a (nuclear-encoded) sigma factor is associated with the core the holoenzyme is formed, which can initiate transcription. The cofactor is Mg(2+). Zn(2+) serves as cofactor.

The protein resides in the plastid. Its subcellular location is the chloroplast. It catalyses the reaction RNA(n) + a ribonucleoside 5'-triphosphate = RNA(n+1) + diphosphate. In terms of biological role, DNA-dependent RNA polymerase catalyzes the transcription of DNA into RNA using the four ribonucleoside triphosphates as substrates. The sequence is that of DNA-directed RNA polymerase subunit beta' from Fagopyrum esculentum subsp. ancestrale (Wild buckwheat).